The primary structure comprises 398 residues: Succinate--CoA ligase [ADP-forming] subunit beta (398 aa).

The ATP-grasp domain occupies 9–254; the sequence is KALLHEFGVP…ETEEDAKEIE (246 aa). ATP-binding positions include lysine 46, 53–55, glutamate 109, serine 112, and glutamate 117; that span reads GRG. Mg(2+) contacts are provided by asparagine 209 and aspartate 223. Substrate is bound by residues asparagine 274 and 331–333; that span reads GIM.

Belongs to the succinate/malate CoA ligase beta subunit family. In terms of assembly, heterotetramer of two alpha and two beta subunits. Mg(2+) serves as cofactor.

It carries out the reaction succinate + ATP + CoA = succinyl-CoA + ADP + phosphate. It catalyses the reaction GTP + succinate + CoA = succinyl-CoA + GDP + phosphate. It participates in carbohydrate metabolism; tricarboxylic acid cycle; succinate from succinyl-CoA (ligase route): step 1/1. Succinyl-CoA synthetase functions in the citric acid cycle (TCA), coupling the hydrolysis of succinyl-CoA to the synthesis of either ATP or GTP and thus represents the only step of substrate-level phosphorylation in the TCA. The beta subunit provides nucleotide specificity of the enzyme and binds the substrate succinate, while the binding sites for coenzyme A and phosphate are found in the alpha subunit. In Bradyrhizobium sp. (strain BTAi1 / ATCC BAA-1182), this protein is Succinate--CoA ligase [ADP-forming] subunit beta.